Reading from the N-terminus, the 141-residue chain is MEIRIFRQDDFEAVITLWERCDLLRPWNDPEMDIERKLNHDPDLFLVAEVNGEIVGSVMGGYDGHRGSAYYLGVHPDFRGRGIANALISRLEKKLIARGCPKIHLMVREDNDAVIGMYEKLEYETVDCITLGKRLIEDREY.

An N-acetyltransferase domain is found at 1–141 (MEIRIFRQDD…GKRLIEDREY (141 aa)).

This sequence belongs to the acetyltransferase family. YpeA subfamily.

The sequence is that of Acetyltransferase ECA0875 from Pectobacterium atrosepticum (strain SCRI 1043 / ATCC BAA-672) (Erwinia carotovora subsp. atroseptica).